A 366-amino-acid chain; its full sequence is Glutamate 5-kinase (366 aa).

An ATP-binding site is contributed by Lys17. Ser57, Asp144, and Asn156 together coordinate substrate. ATP-binding positions include 176 to 177 (SD) and 216 to 222 (TGGMASK). Positions 278-352 (RGALVLDDGA…GRSTTELPDT (75 aa)) constitute a PUA domain.

The protein belongs to the glutamate 5-kinase family.

It localises to the cytoplasm. It carries out the reaction L-glutamate + ATP = L-glutamyl 5-phosphate + ADP. It functions in the pathway amino-acid biosynthesis; L-proline biosynthesis; L-glutamate 5-semialdehyde from L-glutamate: step 1/2. Catalyzes the transfer of a phosphate group to glutamate to form L-glutamate 5-phosphate. This is Glutamate 5-kinase from Nocardia farcinica (strain IFM 10152).